A 260-amino-acid chain; its full sequence is 5-oxoprolinase subunit A 2 (260 aa).

Belongs to the LamB/PxpA family. Forms a complex composed of PxpA, PxpB and PxpC.

The catalysed reaction is 5-oxo-L-proline + ATP + 2 H2O = L-glutamate + ADP + phosphate + H(+). In terms of biological role, catalyzes the cleavage of 5-oxoproline to form L-glutamate coupled to the hydrolysis of ATP to ADP and inorganic phosphate. The polypeptide is 5-oxoprolinase subunit A 2 (Ralstonia nicotianae (strain ATCC BAA-1114 / GMI1000) (Ralstonia solanacearum)).